Here is a 109-residue protein sequence, read N- to C-terminus: Nucleoid-associated protein VP2178 (109 aa).

2 disordered regions span residues 1-22 (MFGKGGMGNLMKQAQQMQERMQ) and 88-109 (QKEKMASVTGGMQLPPGMKMPF).

It belongs to the YbaB/EbfC family. In terms of assembly, homodimer.

The protein localises to the cytoplasm. It localises to the nucleoid. In terms of biological role, binds to DNA and alters its conformation. May be involved in regulation of gene expression, nucleoid organization and DNA protection. In Vibrio parahaemolyticus serotype O3:K6 (strain RIMD 2210633), this protein is Nucleoid-associated protein VP2178.